We begin with the raw amino-acid sequence, 194 residues long: Peptidyl-tRNA hydrolase (194 aa).

TRNA is bound at residue Tyr17. His22 serves as the catalytic Proton acceptor. TRNA contacts are provided by Tyr68, Asn70, and Asn116.

The protein belongs to the PTH family. In terms of assembly, monomer.

It is found in the cytoplasm. It catalyses the reaction an N-acyl-L-alpha-aminoacyl-tRNA + H2O = an N-acyl-L-amino acid + a tRNA + H(+). Hydrolyzes ribosome-free peptidyl-tRNAs (with 1 or more amino acids incorporated), which drop off the ribosome during protein synthesis, or as a result of ribosome stalling. In terms of biological role, catalyzes the release of premature peptidyl moieties from peptidyl-tRNA molecules trapped in stalled 50S ribosomal subunits, and thus maintains levels of free tRNAs and 50S ribosomes. This Pseudomonas paraeruginosa (strain DSM 24068 / PA7) (Pseudomonas aeruginosa (strain PA7)) protein is Peptidyl-tRNA hydrolase.